Reading from the N-terminus, the 67-residue chain is Putative sodium channel alpha-toxin Acra7 (67 aa).

An LCN-type CS-alpha/beta domain is found at 2-66; sequence RDGYIVKPTN…PIKDPNQDCT (65 aa). 4 cysteine pairs are disulfide-bonded: Cys12-Cys65, Cys16-Cys37, Cys23-Cys47, and Cys27-Cys49. Residue Arg67 is a propeptide, removed by a carboxypeptidase.

It belongs to the long (4 C-C) scorpion toxin superfamily. Sodium channel inhibitor family. Alpha subfamily. In terms of tissue distribution, expressed by the venom gland.

It localises to the secreted. Its function is as follows. Alpha toxins bind voltage-independently at site-3 of sodium channels (Nav) and inhibit the inactivation of the activated channels, thereby blocking neuronal transmission. In Androctonus crassicauda (Arabian fat-tailed scorpion), this protein is Putative sodium channel alpha-toxin Acra7.